A 128-amino-acid chain; its full sequence is 3-aminoacrylate deaminase RutC (128 aa).

It belongs to the RutC family.

The enzyme catalyses (Z)-3-aminoacrylate + H2O + H(+) = 3-oxopropanoate + NH4(+). Functionally, involved in pyrimidine catabolism. Catalyzes the deamination of 3-aminoacrylate to malonic semialdehyde, a reaction that can also occur spontaneously. RutC may facilitate the reaction and modulate the metabolic fitness, rather than catalyzing essential functions. The chain is 3-aminoacrylate deaminase RutC from Agrobacterium fabrum (strain C58 / ATCC 33970) (Agrobacterium tumefaciens (strain C58)).